Consider the following 313-residue polypeptide: Protein FixB (313 aa).

Residue 255–283 (LYLAVGISGQIQHMVGANASQTIFAINKD) coordinates FAD.

This sequence belongs to the ETF alpha-subunit/FixB family. Heterodimer of FixA and FixB.

Its pathway is amine and polyamine metabolism; carnitine metabolism. Functionally, required for anaerobic carnitine reduction. May bring reductant to CaiA. The protein is Protein FixB of Shigella dysenteriae serotype 1 (strain Sd197).